The following is a 142-amino-acid chain: UPF0179 protein PH1477 (142 aa).

The protein belongs to the UPF0179 family.

The protein is UPF0179 protein PH1477 of Pyrococcus horikoshii (strain ATCC 700860 / DSM 12428 / JCM 9974 / NBRC 100139 / OT-3).